The chain runs to 394 residues: MAKAKFERTKPHVNIGTIGHVDHGKTSLTAAITIVLAKTGGAQATAYDQIDAAPEEKERGITISTAHVEYETQNRHYAHVDCPGHADYVKNMITGAAQMDGAILVVSAADGPMPQTREHILLAKQVGVPAMVVFLNKIDMVDDPDLLELVEMEVRELLSKYGFPGDEIPIIKGSALQALEGKPEGEKAINELMDAVDSYIPQPVRATDKPFLMPIEDVFSISGRGTVVTGRVESGIIKVGEEIEIVGLKDTQKTTCTGVEMFRKLLDEGQAGDNVGILLRGTKREEVERGQVLAKPGSIKPHDKFEAEVYVLSKEEGGRHTPFTNDYRPQFYFRTTDVTGTIKLSADKQMVMPGDNATFTVELIKPIAMQEGLKFSIREGGRTVGAGVVTKINN.

The tr-type G domain occupies 10–204 (KPHVNIGTIG…AVDSYIPQPV (195 aa)). The segment at 19-26 (GHVDHGKT) is G1. 19–26 (GHVDHGKT) contributes to the GTP binding site. T26 contacts Mg(2+). The interval 60 to 64 (GITIS) is G2. The interval 81 to 84 (DCPG) is G3. Residues 81-85 (DCPGH) and 136-139 (NKID) contribute to the GTP site. The interval 136–139 (NKID) is G4. Positions 174-176 (SAL) are G5.

The protein belongs to the TRAFAC class translation factor GTPase superfamily. Classic translation factor GTPase family. EF-Tu/EF-1A subfamily. In terms of assembly, monomer.

Its subcellular location is the cytoplasm. The catalysed reaction is GTP + H2O = GDP + phosphate + H(+). Functionally, GTP hydrolase that promotes the GTP-dependent binding of aminoacyl-tRNA to the A-site of ribosomes during protein biosynthesis. The sequence is that of Elongation factor Tu from Rickettsia conorii (strain ATCC VR-613 / Malish 7).